We begin with the raw amino-acid sequence, 403 residues long: Phosphoglycerate kinase (403 aa).

Substrate contacts are provided by residues 21 to 23, Arg36, 59 to 62, Arg119, and Arg154; these read DFN and HVGR. ATP contacts are provided by residues Lys207, Gly299, Glu330, and 357-360; that span reads GGDA.

The protein belongs to the phosphoglycerate kinase family. As to quaternary structure, monomer.

It is found in the cytoplasm. It carries out the reaction (2R)-3-phosphoglycerate + ATP = (2R)-3-phospho-glyceroyl phosphate + ADP. The protein operates within carbohydrate degradation; glycolysis; pyruvate from D-glyceraldehyde 3-phosphate: step 2/5. The protein is Phosphoglycerate kinase (pgk) of Chlamydia trachomatis serovar D (strain ATCC VR-885 / DSM 19411 / UW-3/Cx).